Here is a 393-residue protein sequence, read N- to C-terminus: GDNF family receptor alpha-like (393 aa).

Positions 1–19 (MLVFIFLAVTLSSENESSS) are cleaved as a signal peptide. Residues 20 to 349 (QTNDCAHLIQ…LTGFNSFFNG (330 aa)) lie on the Extracellular side of the membrane. N-linked (GlcNAc...) asparagine glycans are attached at residues Asn59, Asn65, Asn101, and Asn115. 11 disulfides stabilise this stretch: Cys131-Cys189, Cys138-Cys144, Cys155-Cys167, Cys162-Cys210, Cys191-Cys198, Cys220-Cys291, Cys227-Cys233, Cys244-Cys275, Cys252-Cys258, Cys269-Cys316, and Cys293-Cys304. The segment at 149 to 228 (ALYLKACSAN…TCLSVIHTCR (80 aa)) is required for interaction with GDF15. Residues 350-370 (ELLYVVVCMAVTCGILFLVML) form a helical membrane-spanning segment. Over 371 to 393 (KLRIQSEKRDPSSIEIAGGVIIQ) the chain is Cytoplasmic.

The protein belongs to the GDNFR family. Interacts (via the extracellular domain) with GDF15 and RET; receptor of GDF15, mediates cellular signaling through interaction with RET after GDF15-binding. Interaction with RET requires previous GDF15-binding. In terms of processing, cleaved and inactivated by MMP14, inhibiting the GDF15-GFRAL aversive response. In terms of tissue distribution, expressed in the brainstem, restricted to cells in the area postrema and the immediately adjacent region of the nucleus tractus solitarius.

The protein localises to the cell membrane. Its activity is regulated as follows. Specifically inhibited by 3P10 monoclonal antibody. Strongly activated by LY3463251, a long-acting and stable agonist composed of GDF15 conjugated monomeric human IgG4 Fc. In terms of biological role, brainstem-restricted receptor for GDF15 hormone, which triggers an aversive response, characterized by nausea, vomiting, and/or loss of appetite in response to various stresses. The aversive response is both required to reduce continuing exposure to those stresses at the time of exposure and to promote avoidance behavior in the future. The GDF15-GFRAL aversive response is triggered by stresses, such as anticancer drugs (camptothecin or cisplatin), cancers or drugs such as metformin. Upon interaction with its ligand, GDF15, mediates the GDF15-induced autophosphorylation and activation of the RET tyrosine kinase receptor, leading to activation of MAPK- and AKT- signaling pathways. Ligand-binding activates GFRAL-expressing neurons localized in the area postrema and nucleus tractus solitarius of the brainstem. The GDF15-GFRAL signal induces expression of genes involved in metabolism, such as lipid metabolism in adipose tissues. This chain is GDNF family receptor alpha-like (Gfral), found in Mus musculus (Mouse).